We begin with the raw amino-acid sequence, 423 residues long: Carboxypeptidase B2 (423 aa).

Positions 1 to 22 (MKLCSLAVLVPIVLFCEQHVFA) are cleaved as a signal peptide. The propeptide at 23 to 114 (FQSGQVLAAL…QISNDTVSPR (92 aa)) is activation peptide. Residues asparagine 44, asparagine 73, and asparagine 85 are each glycosylated (N-linked (GlcNAc...) asparagine). Asparagine 108 is a glycosylation site (N-linked (GlcNAc...) (complex) asparagine). Positions 122-419 (QYHSLNEIYS…AAVSKIAWHV (298 aa)) constitute a Peptidase M14 domain. Residues cysteine 178 and cysteine 191 are joined by a disulfide bond. Zn(2+) contacts are provided by histidine 181 and glutamate 184. Substrate-binding positions include 181-184 (HARE) and arginine 239. Residue asparagine 241 is glycosylated (N-linked (GlcNAc...) asparagine; partial). Disulfide bonds link cysteine 250–cysteine 274 and cysteine 265–cysteine 279. 256-257 (NR) contacts substrate. Histidine 310 contributes to the Zn(2+) binding site. Substrate is bound by residues 311 to 312 (SY) and tyrosine 363. Residue glutamate 385 is the Proton donor/acceptor of the active site.

The protein belongs to the peptidase M14 family. Zn(2+) serves as cofactor. In terms of processing, N-glycosylated. N-glycan at Asn-108: Hex5HexNAc4. In terms of tissue distribution, plasma; synthesized in the liver.

The protein resides in the secreted. It carries out the reaction Release of C-terminal Arg and Lys from a polypeptide.. TAFI/CPB2 is unique among carboxypeptidases in that it spontaneously inactivates with a short half-life, a property that is crucial for its role in controlling blood clot lysis. The zymogen is stabilized by interactions with the activation peptide. Release of the activation peptide increases a dynamic flap mobility and in time this leads to conformational changes that disrupt the catalytic site and expose a cryptic thrombin-cleavage site present at Arg-324. Cleaves C-terminal arginine or lysine residues from biologically active peptides such as kinins or anaphylatoxins in the circulation thereby regulating their activities. Down-regulates fibrinolysis by removing C-terminal lysine residues from fibrin that has already been partially degraded by plasmin. This is Carboxypeptidase B2 (CPB2) from Homo sapiens (Human).